We begin with the raw amino-acid sequence, 202 residues long: Glycerol-3-phosphate acyltransferase (202 aa).

5 helical membrane passes run 3–23, 51–71, 74–94, 116–136, and 140–160; these read ILLA…VVVS, KAAI…VWLV, FGIG…LGHL, AVHP…AFFF, and SLAA…LFGT.

The protein belongs to the PlsY family. Probably interacts with PlsX.

It localises to the cell inner membrane. The catalysed reaction is an acyl phosphate + sn-glycerol 3-phosphate = a 1-acyl-sn-glycero-3-phosphate + phosphate. It functions in the pathway lipid metabolism; phospholipid metabolism. Catalyzes the transfer of an acyl group from acyl-phosphate (acyl-PO(4)) to glycerol-3-phosphate (G3P) to form lysophosphatidic acid (LPA). This enzyme utilizes acyl-phosphate as fatty acyl donor, but not acyl-CoA or acyl-ACP. The chain is Glycerol-3-phosphate acyltransferase from Burkholderia thailandensis (strain ATCC 700388 / DSM 13276 / CCUG 48851 / CIP 106301 / E264).